Here is a 68-residue protein sequence, read N- to C-terminus: Large ribosomal subunit protein bL35 (68 aa).

It belongs to the bacterial ribosomal protein bL35 family.

In Rickettsia akari (strain Hartford), this protein is Large ribosomal subunit protein bL35.